Consider the following 283-residue polypeptide: Mitochondrial outer membrane protein porin (283 aa).

This sequence belongs to the eukaryotic mitochondrial porin family.

The protein localises to the mitochondrion outer membrane. In terms of biological role, forms a channel through the cell membrane that allows diffusion of small hydrophilic molecules. The channel adopts an open conformation at low or zero membrane potential and a closed conformation at potentials above 30-40 mV. The open state has a weak anion selectivity whereas the closed state is cation-selective. In Neurospora crassa (strain ATCC 24698 / 74-OR23-1A / CBS 708.71 / DSM 1257 / FGSC 987), this protein is Mitochondrial outer membrane protein porin.